The sequence spans 466 residues: Phosphomethylpyrimidine synthase (466 aa).

Residues N80, M109, Y139, H175, 195 to 197, 236 to 239, and E275 each bind substrate; these read SRG and DSLR. Residue H279 coordinates Zn(2+). Residue Y302 coordinates substrate. Residue H343 coordinates Zn(2+). C423, C426, and C431 together coordinate [4Fe-4S] cluster.

Belongs to the ThiC family. [4Fe-4S] cluster serves as cofactor.

It catalyses the reaction 5-amino-1-(5-phospho-beta-D-ribosyl)imidazole + S-adenosyl-L-methionine = 4-amino-2-methyl-5-(phosphooxymethyl)pyrimidine + CO + 5'-deoxyadenosine + formate + L-methionine + 3 H(+). It participates in cofactor biosynthesis; thiamine diphosphate biosynthesis. In terms of biological role, catalyzes the synthesis of the hydroxymethylpyrimidine phosphate (HMP-P) moiety of thiamine from aminoimidazole ribotide (AIR) in a radical S-adenosyl-L-methionine (SAM)-dependent reaction. The protein is Phosphomethylpyrimidine synthase of Synechococcus sp. (strain RCC307).